A 234-amino-acid polypeptide reads, in one-letter code: Phosphoribosylaminoimidazole-succinocarboxamide synthase (234 aa).

The protein belongs to the SAICAR synthetase family.

The enzyme catalyses 5-amino-1-(5-phospho-D-ribosyl)imidazole-4-carboxylate + L-aspartate + ATP = (2S)-2-[5-amino-1-(5-phospho-beta-D-ribosyl)imidazole-4-carboxamido]succinate + ADP + phosphate + 2 H(+). It participates in purine metabolism; IMP biosynthesis via de novo pathway; 5-amino-1-(5-phospho-D-ribosyl)imidazole-4-carboxamide from 5-amino-1-(5-phospho-D-ribosyl)imidazole-4-carboxylate: step 1/2. The chain is Phosphoribosylaminoimidazole-succinocarboxamide synthase from Streptococcus pyogenes serotype M18 (strain MGAS8232).